We begin with the raw amino-acid sequence, 607 residues long: Putative pentatricopeptide repeat-containing protein At1g09680 (607 aa).

PPR repeat units lie at residues 239 to 273, 274 to 308, 309 to 343, 344 to 378, 379 to 413, 414 to 448, 449 to 483, 484 to 518, and 519 to 553; these read NVYV…SLQP, TVVS…RTRP, DVFT…GLIP, NDVI…GLQP, DIVL…GLRP, DKIT…GIEL, DRVG…GIKP, DDVT…GHVP, and SVVT…GVVP.

It belongs to the PPR family. P subfamily.

The polypeptide is Putative pentatricopeptide repeat-containing protein At1g09680 (Arabidopsis thaliana (Mouse-ear cress)).